The following is a 62-amino-acid chain: Photosystem II reaction center protein Z (62 aa).

2 helical membrane passes run 8–28 and 41–61; these read AVFALIAISFLLVIGVPVALA and FSGVSLWIGSVLFVGILNSFI.

Belongs to the PsbZ family. In terms of assembly, PSII is composed of 1 copy each of membrane proteins PsbA, PsbB, PsbC, PsbD, PsbE, PsbF, PsbH, PsbI, PsbJ, PsbK, PsbL, PsbM, PsbT, PsbY, PsbZ, Psb30/Ycf12, at least 3 peripheral proteins of the oxygen-evolving complex and a large number of cofactors. It forms dimeric complexes.

The protein localises to the plastid. It is found in the chloroplast thylakoid membrane. May control the interaction of photosystem II (PSII) cores with the light-harvesting antenna, regulates electron flow through the 2 photosystem reaction centers. PSII is a light-driven water plastoquinone oxidoreductase, using light energy to abstract electrons from H(2)O, generating a proton gradient subsequently used for ATP formation. The protein is Photosystem II reaction center protein Z of Pinus thunbergii (Japanese black pine).